The primary structure comprises 103 residues: uncharacterized protein (103 aa).

Helical transmembrane passes span 1–21 (MPGVIFWTIFIIQFMIWVFLS), 29–49 (IAFIWGTMPFLALYLKYTGYF), and 69–89 (VVEWSYLVVQTTVPSWIGLLF).

It is found in the cell membrane. This is an uncharacterized protein from Methanocaldococcus jannaschii (strain ATCC 43067 / DSM 2661 / JAL-1 / JCM 10045 / NBRC 100440) (Methanococcus jannaschii).